The chain runs to 262 residues: uncharacterized protein (262 aa).

An N-terminal signal peptide occupies residues 1–22; the sequence is MGYLKRFALYISVMILIFAIAG. C23 carries N-palmitoyl cysteine lipidation. Residue C23 is the site of S-diacylglycerol cysteine attachment.

It belongs to the staphylococcal tandem lipoprotein family.

Its subcellular location is the cell membrane. This is an uncharacterized protein from Staphylococcus aureus (strain NCTC 8325 / PS 47).